We begin with the raw amino-acid sequence, 397 residues long: uncharacterized protein (397 aa).

The next 11 helical transmembrane spans lie at 9 to 29 (NAVL…GFLT), 38 to 58 (LLAS…GAQL), 85 to 105 (FLAA…VGGA), 112 to 132 (IFGI…ILIF), 148 to 168 (MGFI…PPVV), 182 to 202 (PIAI…FAGA), 226 to 246 (AILI…GVVS), 271 to 291 (VLFG…AAYT), 310 to 330 (WIIA…KPAA), 331 to 351 (VLVF…ALIL), and 365 to 385 (HPVF…ILSG).

The protein belongs to the NRAMP family.

It is found in the cell membrane. This is an uncharacterized protein from Haemophilus influenzae (strain ATCC 51907 / DSM 11121 / KW20 / Rd).